The primary structure comprises 453 residues: Bifunctional protein GlmU (453 aa).

The pyrophosphorylase stretch occupies residues 1–227; the sequence is MAVSVIILAA…SIEVMGVNDR (227 aa). Residues 8–11, Lys22, Gln73, 78–79, 100–102, Gly137, Glu152, Asn167, and Asn225 contribute to the UDP-N-acetyl-alpha-D-glucosamine site; these read LAAG, GT, and SGD. Mg(2+) is bound at residue Asp102. Mg(2+) is bound at residue Asn225. The segment at 228 to 248 is linker; it reads QQLAYLERFYQKREAARLMGE. Positions 249–453 are N-acetyltransferase; sequence GVSLSDPDRF…WPGWKRPSKK (205 aa). The UDP-N-acetyl-alpha-D-glucosamine site is built by Arg331 and Lys349. Residue His361 is the Proton acceptor of the active site. Residues Tyr364 and Asn375 each coordinate UDP-N-acetyl-alpha-D-glucosamine. Residues Ala378, 384–385, Ser403, Ala421, and Arg438 each bind acetyl-CoA; that span reads NY. The tract at residues 430–453 is disordered; that stretch reads PPGELTLSRTPQKSWPGWKRPSKK.

This sequence in the N-terminal section; belongs to the N-acetylglucosamine-1-phosphate uridyltransferase family. The protein in the C-terminal section; belongs to the transferase hexapeptide repeat family. Homotrimer. The cofactor is Mg(2+).

The protein resides in the cytoplasm. The catalysed reaction is alpha-D-glucosamine 1-phosphate + acetyl-CoA = N-acetyl-alpha-D-glucosamine 1-phosphate + CoA + H(+). The enzyme catalyses N-acetyl-alpha-D-glucosamine 1-phosphate + UTP + H(+) = UDP-N-acetyl-alpha-D-glucosamine + diphosphate. The protein operates within nucleotide-sugar biosynthesis; UDP-N-acetyl-alpha-D-glucosamine biosynthesis; N-acetyl-alpha-D-glucosamine 1-phosphate from alpha-D-glucosamine 6-phosphate (route II): step 2/2. Its pathway is nucleotide-sugar biosynthesis; UDP-N-acetyl-alpha-D-glucosamine biosynthesis; UDP-N-acetyl-alpha-D-glucosamine from N-acetyl-alpha-D-glucosamine 1-phosphate: step 1/1. It participates in bacterial outer membrane biogenesis; LPS lipid A biosynthesis. Catalyzes the last two sequential reactions in the de novo biosynthetic pathway for UDP-N-acetylglucosamine (UDP-GlcNAc). The C-terminal domain catalyzes the transfer of acetyl group from acetyl coenzyme A to glucosamine-1-phosphate (GlcN-1-P) to produce N-acetylglucosamine-1-phosphate (GlcNAc-1-P), which is converted into UDP-GlcNAc by the transfer of uridine 5-monophosphate (from uridine 5-triphosphate), a reaction catalyzed by the N-terminal domain. In Nitrosococcus oceani (strain ATCC 19707 / BCRC 17464 / JCM 30415 / NCIMB 11848 / C-107), this protein is Bifunctional protein GlmU.